Reading from the N-terminus, the 548-residue chain is Probable thiamine biosynthetic bifunctional enzyme, chloroplastic (548 aa).

The segment covering 1-10 (MAAAPQQSVH) has biased composition (polar residues). A disordered region spans residues 1–40 (MAAAPQQSVHPSLPSSTSTLRLLISSSPRRPPPPPPRARR). Residues 1-47 (MAAAPQQSVHPSLPSSTSTLRLLISSSPRRPPPPPPRARRYNRLAAS) constitute a chloroplast transit peptide. Over residues 11–28 (PSLPSSTSTLRLLISSSP) the composition is skewed to low complexity. 4-amino-2-methyl-5-(diphosphooxymethyl)pyrimidine is bound by residues 372-376 (QLREK) and Asn-404. The Mg(2+) site is built by Asp-405 and Asp-424. Ser-443 lines the 4-amino-2-methyl-5-(diphosphooxymethyl)pyrimidine pocket. 469–471 (TST) serves as a coordination point for 2-[(2R,5Z)-2-carboxy-4-methylthiazol-5(2H)-ylidene]ethyl phosphate. Lys-472 serves as a coordination point for 4-amino-2-methyl-5-(diphosphooxymethyl)pyrimidine. Residues Gly-499 and 522-523 (VS) contribute to the 2-[(2R,5Z)-2-carboxy-4-methylthiazol-5(2H)-ylidene]ethyl phosphate site.

Belongs to the thiamine-phosphate synthase family. It depends on Mg(2+) as a cofactor.

It localises to the plastid. The protein localises to the chloroplast. It carries out the reaction 2-[(2R,5Z)-2-carboxy-4-methylthiazol-5(2H)-ylidene]ethyl phosphate + 4-amino-2-methyl-5-(diphosphooxymethyl)pyrimidine + 2 H(+) = thiamine phosphate + CO2 + diphosphate. The enzyme catalyses 2-(2-carboxy-4-methylthiazol-5-yl)ethyl phosphate + 4-amino-2-methyl-5-(diphosphooxymethyl)pyrimidine + 2 H(+) = thiamine phosphate + CO2 + diphosphate. It catalyses the reaction 4-methyl-5-(2-phosphooxyethyl)-thiazole + 4-amino-2-methyl-5-(diphosphooxymethyl)pyrimidine + H(+) = thiamine phosphate + diphosphate. The catalysed reaction is 4-amino-5-hydroxymethyl-2-methylpyrimidine + ATP = 4-amino-2-methyl-5-(phosphooxymethyl)pyrimidine + ADP + H(+). It functions in the pathway cofactor biosynthesis; thiamine diphosphate biosynthesis; thiamine phosphate from 4-amino-2-methyl-5-diphosphomethylpyrimidine and 4-methyl-5-(2-phosphoethyl)-thiazole: step 1/1. It participates in cofactor biosynthesis; thiamine diphosphate biosynthesis; 4-amino-2-methyl-5-diphosphomethylpyrimidine from 5-amino-1-(5-phospho-D-ribosyl)imidazole: step 2/3. Essential for thiamine biosynthesis. Bifunctional enzyme that catalyzes the phosphorylation of hydroxymethylpyrimidine phosphate (HMP-P) to HMP-PP and condenses 4-methyl-5-(beta-hydroxyethyl)thiazole monophosphate (THZ-P) and 2-methyl-4-amino-5-hydroxymethyl pyrimidine pyrophosphate (HMP-PP) to form thiamine monophosphate (TMP). The sequence is that of Probable thiamine biosynthetic bifunctional enzyme, chloroplastic from Oryza sativa subsp. japonica (Rice).